The following is a 276-amino-acid chain: Undecaprenyl-diphosphatase (276 aa).

Transmembrane regions (helical) follow at residues 2–22 (LEILKAVILGIVEGITEFLPI), 43–63 (FIDMFNVVIQLGAIMAVVVLY), 83–103 (WTLWKKVIIAVIPSVIIGLPL), 111–131 (LMNWLVVSIALIVYGVLFIVI), 147–167 (TLPYKVAILIGCFQILSLIPG), 186–206 (YVAAEFSFFLAIPTMFGASLL), 224–244 (LILAVGVIVSFVVAYASIRFL), and 255–275 (AFGWYRIILGVIVIAYFALLA).

Belongs to the UppP family.

Its subcellular location is the cell membrane. The catalysed reaction is di-trans,octa-cis-undecaprenyl diphosphate + H2O = di-trans,octa-cis-undecaprenyl phosphate + phosphate + H(+). In terms of biological role, catalyzes the dephosphorylation of undecaprenyl diphosphate (UPP). Confers resistance to bacitracin. The chain is Undecaprenyl-diphosphatase from Limosilactobacillus fermentum (strain NBRC 3956 / LMG 18251) (Lactobacillus fermentum).